Consider the following 353-residue polypeptide: Guanine nucleotide-binding protein alpha-3 subunit (353 aa).

A lipid anchor (N-myristoyl glycine) is attached at Gly-2. Cys-4 carries the S-palmitoyl cysteine lipid modification. The region spanning 32-353 (KVVKLLLLGA…IQANLQGCGL (322 aa)) is the G-alpha domain. The segment at 35–48 (KLLLLGAGECGKST) is G1 motif. Residues 40–47 (GAGECGKS), 176–182 (LLSRIKT), 201–205 (DVGGQ), 270–273 (NKKD), and Ala-326 contribute to the GTP site. Mg(2+) is bound by residues Ser-47 and Thr-182. Residues 174-182 (DILLSRIKT) form a G2 motif region. A G3 motif region spans residues 197 to 206 (FRVFDVGGQR). Residues 266–273 (ILFLNKKD) form a G4 motif region. The segment at 324-329 (TCATDT) is G5 motif.

This sequence belongs to the G-alpha family. G(q) subfamily. As to quaternary structure, g proteins are composed of 3 units; alpha, beta and gamma. The alpha chain contains the guanine nucleotide binding site.

Functionally, guanine nucleotide-binding proteins (G proteins) are involved as modulators or transducers in various transmembrane signaling systems. Promotes transcription of 3',5'-cyclic phosphodiesterases pde-1 and pde-5, leading to reduced cGMP levels in sensory neurons. This causes suppression of insulin production and signaling which leads to increased daf-16 activity and contributes to increased adult lifespan and resistance to oxidative stress. In addition, by reducing cGMP levels, inhibits TGF-beta signaling pathways. Involved in behavioral response to P.aeruginosa by controlling the expression of daf-7, a member of the TGF-beta family, in ASJ sensory neurons. Plays a role in the avoidance response to the noxious chemical quinine in ASH sensory neurons. This chain is Guanine nucleotide-binding protein alpha-3 subunit, found in Caenorhabditis elegans.